The primary structure comprises 395 residues: Putative ankyrin repeat protein RF_0950 (395 aa).

ANK repeat units follow at residues 3–32 (YQKE…NPNT), 36–65 (YGKL…DPNA), 69–98 (IKDP…NPNV), 101–130 (RHEN…DPNQ), 134–166 (NGNT…EKAL), 172–201 (NGET…TVNI), and 205–234 (AGNT…ELNE). In terms of domain architecture, Glutamine amidotransferase type-1 spans 272-395 (KTKLIYQGGD…YLKVPILKEK (124 aa)). Cys377 acts as the Nucleophile in catalysis.

This is Putative ankyrin repeat protein RF_0950 from Rickettsia felis (strain ATCC VR-1525 / URRWXCal2) (Rickettsia azadi).